A 236-amino-acid chain; its full sequence is Large ribosomal subunit protein uL1 (236 aa).

Belongs to the universal ribosomal protein uL1 family. In terms of assembly, part of the 50S ribosomal subunit.

Its function is as follows. Binds directly to 23S rRNA. The L1 stalk is quite mobile in the ribosome, and is involved in E site tRNA release. In terms of biological role, protein L1 is also a translational repressor protein, it controls the translation of the L11 operon by binding to its mRNA. This chain is Large ribosomal subunit protein uL1, found in Corynebacterium glutamicum (strain R).